We begin with the raw amino-acid sequence, 378 residues long: Putative glutamate--cysteine ligase 2 (378 aa).

Belongs to the glutamate--cysteine ligase type 2 family. YbdK subfamily.

It catalyses the reaction L-cysteine + L-glutamate + ATP = gamma-L-glutamyl-L-cysteine + ADP + phosphate + H(+). ATP-dependent carboxylate-amine ligase which exhibits weak glutamate--cysteine ligase activity. This is Putative glutamate--cysteine ligase 2 from Salinispora tropica (strain ATCC BAA-916 / DSM 44818 / JCM 13857 / NBRC 105044 / CNB-440).